The primary structure comprises 256 residues: Pimeloyl-[acyl-carrier protein] methyl ester esterase (256 aa).

Residues 15 to 242 enclose the AB hydrolase-1 domain; the sequence is HLVLLHGWGL…AAHAPFISHP (228 aa). Residues Trp22, 82 to 83, and 143 to 147 contribute to the substrate site; these read SL and FLALQ. The active-site Nucleophile is the Ser82. Residues Asp207 and His235 contribute to the active site. His235 contributes to the substrate binding site.

It belongs to the AB hydrolase superfamily. Carboxylesterase BioH family. Monomer.

It is found in the cytoplasm. It carries out the reaction 6-carboxyhexanoyl-[ACP] methyl ester + H2O = 6-carboxyhexanoyl-[ACP] + methanol + H(+). Its pathway is cofactor biosynthesis; biotin biosynthesis. Functionally, the physiological role of BioH is to remove the methyl group introduced by BioC when the pimeloyl moiety is complete. It allows to synthesize pimeloyl-ACP via the fatty acid synthetic pathway through the hydrolysis of the ester bonds of pimeloyl-ACP esters. This Escherichia coli O6:H1 (strain CFT073 / ATCC 700928 / UPEC) protein is Pimeloyl-[acyl-carrier protein] methyl ester esterase.